The primary structure comprises 276 residues: Undecaprenyl-diphosphatase 2 (276 aa).

8 helical membrane passes run Ile-4 to Leu-24, Asp-44 to Phe-64, Ala-87 to Leu-107, Leu-114 to Trp-134, Leu-150 to Phe-170, Phe-193 to Leu-213, Leu-225 to Met-245, and Leu-256 to Val-276.

This sequence belongs to the UppP family.

The protein localises to the cell inner membrane. It carries out the reaction di-trans,octa-cis-undecaprenyl diphosphate + H2O = di-trans,octa-cis-undecaprenyl phosphate + phosphate + H(+). Its function is as follows. Catalyzes the dephosphorylation of undecaprenyl diphosphate (UPP). Confers resistance to bacitracin. This is Undecaprenyl-diphosphatase 2 from Chromobacterium violaceum (strain ATCC 12472 / DSM 30191 / JCM 1249 / CCUG 213 / NBRC 12614 / NCIMB 9131 / NCTC 9757 / MK).